A 302-amino-acid chain; its full sequence is Sulfate adenylyltransferase subunit 2 (302 aa).

Belongs to the PAPS reductase family. CysD subfamily. As to quaternary structure, heterodimer composed of CysD, the smaller subunit, and CysN.

The enzyme catalyses sulfate + ATP + H(+) = adenosine 5'-phosphosulfate + diphosphate. It participates in sulfur metabolism; hydrogen sulfide biosynthesis; sulfite from sulfate: step 1/3. With CysN forms the ATP sulfurylase (ATPS) that catalyzes the adenylation of sulfate producing adenosine 5'-phosphosulfate (APS) and diphosphate, the first enzymatic step in sulfur assimilation pathway. APS synthesis involves the formation of a high-energy phosphoric-sulfuric acid anhydride bond driven by GTP hydrolysis by CysN coupled to ATP hydrolysis by CysD. The protein is Sulfate adenylyltransferase subunit 2 of Psychromonas ingrahamii (strain DSM 17664 / CCUG 51855 / 37).